We begin with the raw amino-acid sequence, 392 residues long: S-adenosylmethionine synthase (392 aa).

Position 20 (His20) interacts with ATP. Asp22 provides a ligand contact to Mg(2+). Glu48 serves as a coordination point for K(+). L-methionine contacts are provided by Glu61 and Gln106. Residues 106-116 form a flexible loop region; it reads QSRDIINAIEK. Residues 171-173, Asp248, 254-255, Ala271, and Lys275 contribute to the ATP site; these read DSK and RK. Residue Asp248 participates in L-methionine binding. Lys279 is a binding site for L-methionine.

It belongs to the AdoMet synthase family. Homotetramer; dimer of dimers. It depends on Mg(2+) as a cofactor. K(+) is required as a cofactor.

It localises to the cytoplasm. It catalyses the reaction L-methionine + ATP + H2O = S-adenosyl-L-methionine + phosphate + diphosphate. The protein operates within amino-acid biosynthesis; S-adenosyl-L-methionine biosynthesis; S-adenosyl-L-methionine from L-methionine: step 1/1. Catalyzes the formation of S-adenosylmethionine (AdoMet) from methionine and ATP. The overall synthetic reaction is composed of two sequential steps, AdoMet formation and the subsequent tripolyphosphate hydrolysis which occurs prior to release of AdoMet from the enzyme. In Borreliella burgdorferi (strain ATCC 35210 / DSM 4680 / CIP 102532 / B31) (Borrelia burgdorferi), this protein is S-adenosylmethionine synthase.